The primary structure comprises 123 residues: Altered inheritance of mitochondria protein 4 (123 aa).

Basic and acidic residues predominate over residues Met1–Val16. The tract at residues Met1–Lys42 is disordered. Over residues Ser17 to Arg28 the composition is skewed to basic residues.

Belongs to the AIM4 family. As to quaternary structure, may interact with the nuclear pore complex.

It localises to the cytoplasm. This chain is Altered inheritance of mitochondria protein 4 (AIM4), found in Saccharomyces cerevisiae (strain ATCC 204508 / S288c) (Baker's yeast).